The chain runs to 973 residues: MTSTHHSRRSRETPQPEMSIGRYTRLDEIGRGSFATVYQGVHTKTRTYVAIKSVNLSKLNKKLKDNLSSEIHILKGLYHPHIVALIDCHETTSHIHLVMEYCALGDLSLFIKRRDTLGDHRYTRDMIAKYPNPPGGALNEVVVRHFLKQLASALKFLRDRNLIHRDIKPQNLLLCPSPSSYRSGVTQVVPFKGSEDSFNPATGLESLPLLKIADFGFARSLPATSLAETLCGSPLYMAPEILRYEKYDAKADLWSVGTVLYEMVVGKPPFRATNHVELLRKIEKGEDRIKFPEENPASDEIKALIRALLKRNPVERLNFPDFFQNGVITSPIPGLVADDLPSIPQGPPADPETAEATPRPDSRSGATVPGGTEREREGPSLPKGDTGLTQRPPSQNQRFGTPQTTTPMRRIGSGDRPPSTPKESTPPMTYPQRPSAVSHATAPGRQELVDRNATFTAMERQKGRNTFSEGSPQIDRQADKLREERERAAQDVAFERDYVVVEKRAVEVNAFADELAHSPRIQGNISRGAQTGALSRRSTVHGPTPSNPSPPQATVGKAMQVLSGRSRADSMHNRQGSYERRYGQSPTSATSAISKALNMASGRLFGMGFSPPLAITKGGRSPPLAYNPFPAYPAHGSLMIGDGAKSNLALDEDTKTVQILEECATRSDVVYGFAEVKYKQLVPLAPSVQTDPSSKLNLAGERENPDSADGGLTVDAIVTLSEEALVLYVKALSLLAKSMDIAGAWWARKNRGDGFGDSAMSRANGASTLAGTRINNVVQWIRNRFNEVLEKGEFVRLKLIEAQKRLPPDHPSHPDNHSVGSSLGSGASVDVVVSPGVSAEKLMYDRALEMSRTAAINELTGEDLSGCEIAYVTAIRMLEAVLENGEVPRFGQDKDDTSKDSDKIVLDAVQADERQVVIKLLTIQAVVASIRSRLAALRKKLAILAKRAPTPSANVPSKMASSNPVSVGATPPK.

A Protein kinase domain is found at 23-328; sequence YTRLDEIGRG…FPDFFQNGVI (306 aa). ATP is bound by residues 29–37 and K52; that span reads IGRGSFATV. D166 serves as the catalytic Proton acceptor. Disordered stretches follow at residues 338 to 446, 460 to 482, 523 to 587, and 949 to 973; these read DDLP…PGRQ, RQKG…DKLR, GNIS…QSPT, and PTPS…TPPK. Over residues 387–407 the composition is skewed to polar residues; that stretch reads GLTQRPPSQNQRFGTPQTTTP. Over residues 523–537 the composition is skewed to polar residues; sequence GNISRGAQTGALSRR. The segment covering 566–582 has biased composition (basic and acidic residues); it reads SRADSMHNRQGSYERRY. The segment covering 951–965 has biased composition (polar residues); the sequence is PSANVPSKMASSNPV.

Belongs to the protein kinase superfamily. Ser/Thr protein kinase family. APG1/unc-51/ULK1 subfamily. In terms of assembly, homodimer. Forms a ternary complex with ATG13 and ATG17.

The protein resides in the cytoplasm. It localises to the preautophagosomal structure membrane. It carries out the reaction L-seryl-[protein] + ATP = O-phospho-L-seryl-[protein] + ADP + H(+). It catalyses the reaction L-threonyl-[protein] + ATP = O-phospho-L-threonyl-[protein] + ADP + H(+). Its function is as follows. Serine/threonine protein kinase involved in the cytoplasm to vacuole transport (Cvt) and found to be essential in autophagy, where it is required for the formation of autophagosomes. Involved in the clearance of protein aggregates which cannot be efficiently cleared by the proteasome. Required for selective autophagic degradation of the nucleus (nucleophagy) as well as for mitophagy which contributes to regulate mitochondrial quantity and quality by eliminating the mitochondria to a basal level to fulfill cellular energy requirements and preventing excess ROS production. Also involved in endoplasmic reticulum-specific autophagic process, in selective removal of ER-associated degradation (ERAD) substrates. Plays a key role in ATG9 and ATG23 cycling through the pre-autophagosomal structure and is necessary to promote ATG18 binding to ATG9 through phosphorylation of ATG9. Catalyzes phosphorylation of ATG4, decreasing the interaction between ATG4 and ATG8 and impairing deconjugation of PE-conjugated forms of ATG8. The chain is Serine/threonine-protein kinase atg1 from Aspergillus fumigatus (strain ATCC MYA-4609 / CBS 101355 / FGSC A1100 / Af293) (Neosartorya fumigata).